An 808-amino-acid chain; its full sequence is Leucine--tRNA ligase (808 aa).

The short motif at 40-51 (PYPSGQGLHVGH) is the 'HIGH' region element. The short motif at 580 to 584 (KMSKS) is the 'KMSKS' region element. Lys583 serves as a coordination point for ATP.

Belongs to the class-I aminoacyl-tRNA synthetase family.

It is found in the cytoplasm. The catalysed reaction is tRNA(Leu) + L-leucine + ATP = L-leucyl-tRNA(Leu) + AMP + diphosphate. In Leuconostoc mesenteroides subsp. mesenteroides (strain ATCC 8293 / DSM 20343 / BCRC 11652 / CCM 1803 / JCM 6124 / NCDO 523 / NBRC 100496 / NCIMB 8023 / NCTC 12954 / NRRL B-1118 / 37Y), this protein is Leucine--tRNA ligase.